Consider the following 95-residue polypeptide: Aspartyl/glutamyl-tRNA(Asn/Gln) amidotransferase subunit C (95 aa).

It belongs to the GatC family. Heterotrimer of A, B and C subunits.

The enzyme catalyses L-glutamyl-tRNA(Gln) + L-glutamine + ATP + H2O = L-glutaminyl-tRNA(Gln) + L-glutamate + ADP + phosphate + H(+). It carries out the reaction L-aspartyl-tRNA(Asn) + L-glutamine + ATP + H2O = L-asparaginyl-tRNA(Asn) + L-glutamate + ADP + phosphate + 2 H(+). Its function is as follows. Allows the formation of correctly charged Asn-tRNA(Asn) or Gln-tRNA(Gln) through the transamidation of misacylated Asp-tRNA(Asn) or Glu-tRNA(Gln) in organisms which lack either or both of asparaginyl-tRNA or glutaminyl-tRNA synthetases. The reaction takes place in the presence of glutamine and ATP through an activated phospho-Asp-tRNA(Asn) or phospho-Glu-tRNA(Gln). This is Aspartyl/glutamyl-tRNA(Asn/Gln) amidotransferase subunit C from Rhodospirillum rubrum (strain ATCC 11170 / ATH 1.1.1 / DSM 467 / LMG 4362 / NCIMB 8255 / S1).